We begin with the raw amino-acid sequence, 145 residues long: HTH-type transcriptional regulator MhqR (145 aa).

The region spanning S5–L137 is the HTH marR-type domain. Positions L51–Q74 form a DNA-binding region, H-T-H motif.

Negatively regulates mhqA, mhqED, mhqNOP, and azoR2 which may contribute to the degradation of aromatic compounds. This is HTH-type transcriptional regulator MhqR (mhqR) from Bacillus subtilis (strain 168).